The following is a 634-amino-acid chain: 1-deoxy-D-xylulose-5-phosphate synthase (634 aa).

Residues His-74 and 115–117 each bind thiamine diphosphate; that span reads AHS. Asp-146 contacts Mg(2+). Thiamine diphosphate contacts are provided by residues 147-148, Asn-176, Tyr-283, and Glu-365; that span reads GA. Asn-176 contributes to the Mg(2+) binding site.

The protein belongs to the transketolase family. DXPS subfamily. As to quaternary structure, homodimer. Mg(2+) is required as a cofactor. The cofactor is thiamine diphosphate.

It catalyses the reaction D-glyceraldehyde 3-phosphate + pyruvate + H(+) = 1-deoxy-D-xylulose 5-phosphate + CO2. It functions in the pathway metabolic intermediate biosynthesis; 1-deoxy-D-xylulose 5-phosphate biosynthesis; 1-deoxy-D-xylulose 5-phosphate from D-glyceraldehyde 3-phosphate and pyruvate: step 1/1. Catalyzes the acyloin condensation reaction between C atoms 2 and 3 of pyruvate and glyceraldehyde 3-phosphate to yield 1-deoxy-D-xylulose-5-phosphate (DXP). In Burkholderia mallei (strain ATCC 23344), this protein is 1-deoxy-D-xylulose-5-phosphate synthase.